The primary structure comprises 594 residues: ATPase family AAA domain-containing protein 3 (594 aa).

The disordered stretch occupies residues 1–50; that stretch reads MSWLFGLNKGQQGPPSVPGFPEPPSPPGGSGDGGDKNKPKDKWSNFDPTG. Topologically, residues 1–242 are mitochondrial intermembrane; it reads MSWLFGLNKG…FRAFISDWDK (242 aa). Over residues 15–27 the composition is skewed to pro residues; that stretch reads PSVPGFPEPPSPP. Residues 33–44 show a composition bias toward basic and acidic residues; it reads GGDKNKPKDKWS. The stretch at 51–213 forms a coiled coil; it reads LERAAKAARE…RENIRLKAAE (163 aa). The chain crosses the membrane as a helical span at residues 243–260; it reads VTATVAGLSLLAVGIYTA. Residues 261–594 are Mitochondrial matrix-facing; sequence KNATGVAGRY…LQPLLEGTPV (334 aa). 348 to 355 is an ATP binding site; sequence GPPGTGKT. The span at 571–581 shows a compositional bias: basic and acidic residues; that stretch reads EGKENAAKESG. The tract at residues 571–594 is disordered; the sequence is EGKENAAKESGKNPLQPLLEGTPV.

Belongs to the AAA ATPase family.

It localises to the mitochondrion inner membrane. The protein resides in the mitochondrion matrix. It is found in the mitochondrion nucleoid. Its function is as follows. Essential for mitochondrial network organization, mitochondrial metabolism and cell growth at organism and cellular level. May play an important role in mitochondrial protein synthesis. May also participate in mitochondrial DNA replication. May bind to mitochondrial DNA D-loops and contribute to nucleoid stability. Required for enhanced channeling of cholesterol for hormone-dependent steroidogenesis. This chain is ATPase family AAA domain-containing protein 3 (atad3), found in Xenopus tropicalis (Western clawed frog).